Here is a 394-residue protein sequence, read N- to C-terminus: Mannosyl-3-phosphoglycerate synthase (394 aa).

The protein belongs to the glycosyltransferase 2 family.

It is found in the cytoplasm. It catalyses the reaction (2R)-3-phosphoglycerate + GDP-alpha-D-mannose = 2-O-(alpha-D-mannosyl)-3-phosphoglycerate + GDP + H(+). The protein operates within carbohydrate biosynthesis; 2-(alpha-D-mannosyl)-D-glycerate biosynthesis; 2-(alpha-D-mannosyl)-D-glycerate from GDP-alpha-D-mannose (MPG route): step 1/2. Transfers a mannosyl group from GDP-mannose to phosphoglycerate to form mannosyl-3-phosphoglycerate (MPG). The polypeptide is Mannosyl-3-phosphoglycerate synthase (mngA) (Pyrococcus furiosus (strain ATCC 43587 / DSM 3638 / JCM 8422 / Vc1)).